Consider the following 366-residue polypeptide: Peroxisomal (S)-2-hydroxy-acid oxidase GLO4 (366 aa).

In terms of domain architecture, FMN hydroxy acid dehydrogenase spans 1–360; that stretch reads MEDNLPVNVR…TRSHVMTEGD (360 aa). Tyr27 provides a ligand contact to a 2-oxocarboxylate. FMN-binding positions include 80–82, Ser109, 130–132, and Thr158; these read PTG and QLY. Tyr132 provides a ligand contact to a 2-oxocarboxylate. Arg167 serves as a coordination point for a 2-oxocarboxylate. The FMN site is built by Lys231 and Ser253. Residue His255 is the Proton acceptor of the active site. A 2-oxocarboxylate is bound at residue Arg258. Residues 286 to 290 and 309 to 310 contribute to the FMN site; these read DGGIR and GR. A Microbody targeting signal motif is present at residues 364–366; that stretch reads SLL.

It belongs to the FMN-dependent alpha-hydroxy acid dehydrogenase family. Homotetramer. Binds to CATB and CATC; these interactions are disturbed by alpha-hydroxy-2-pyridinemethanesulfonic acid (HPMS) and salicylic acid (SA). Requires FMN as cofactor.

The protein resides in the peroxisome. It catalyses the reaction a (2S)-2-hydroxycarboxylate + O2 = a 2-oxocarboxylate + H2O2. Its pathway is lipid metabolism; fatty acid metabolism. Oxidase that catalyzes the oxidation of a broad range of 2-hydroxyacids to the corresponding 2-oxoacids, with a reduction of O2 to H2O2. May be involved in a general medium- and long-chain fatty acid catabolic pathway such as alpha-oxidation. In Oryza sativa subsp. japonica (Rice), this protein is Peroxisomal (S)-2-hydroxy-acid oxidase GLO4 (GLO4).